A 162-amino-acid polypeptide reads, in one-letter code: MTDLYIDADACPVKAEAERVAVRHGVRMFLVSNGGIRPPAHPLVESIFVPEGPDVADMWIADRARTGDVVVTSDIPLAAKVVAAGALVVKPNGETLTTANIGNALATRDLMADLRSADPFRQGGGRTFSKADRSRFLDALERAMRKAQEAGRSASGGSEAGS.

The protein belongs to the UPF0178 family.

In Cereibacter sphaeroides (strain ATCC 17029 / ATH 2.4.9) (Rhodobacter sphaeroides), this protein is UPF0178 protein Rsph17029_2512.